The following is a 253-amino-acid chain: Kojic acid related protein 1 (253 aa).

3 consecutive transmembrane segments (helical) span residues 23–43, 53–73, and 117–137; these read PIKF…FILI, IFYP…YIVS, and ALFG…IVSV. The interval 174 to 253 is disordered; that stretch reads FPMMSPALPS…PPPPKKAAKV (80 aa). 2 stretches are compositionally biased toward polar residues: residues 184-200 and 226-240; these read GGTT…SPEF and QQES…NQPQ. Positions 242–253 are enriched in pro residues; it reads YFPPPPKKAAKV.

It is found in the membrane. Functionally, involved in mycelium growth and repression of conidia formation by affecting the expression of brlA and abaA. Acts as a negative regulation factor for kojic acid production through affecting the expression of kojA, kojR and kojT. In Aspergillus oryzae (strain ATCC 42149 / RIB 40) (Yellow koji mold), this protein is Kojic acid related protein 1.